Reading from the N-terminus, the 48-residue chain is ATP synthase protein 8 (48 aa).

A helical membrane pass occupies residues 13-33 (LTYGFLLLIILLVLFSQFLLP).

Belongs to the ATPase protein 8 family. As to quaternary structure, F-type ATPases have 2 components, CF(1) - the catalytic core - and CF(0) - the membrane proton channel.

The protein resides in the mitochondrion membrane. In terms of biological role, mitochondrial membrane ATP synthase (F(1)F(0) ATP synthase or Complex V) produces ATP from ADP in the presence of a proton gradient across the membrane which is generated by electron transport complexes of the respiratory chain. F-type ATPases consist of two structural domains, F(1) - containing the extramembraneous catalytic core and F(0) - containing the membrane proton channel, linked together by a central stalk and a peripheral stalk. During catalysis, ATP synthesis in the catalytic domain of F(1) is coupled via a rotary mechanism of the central stalk subunits to proton translocation. Part of the complex F(0) domain. Minor subunit located with subunit a in the membrane. This chain is ATP synthase protein 8 (ATP8), found in Wickerhamomyces canadensis (Yeast).